We begin with the raw amino-acid sequence, 432 residues long: Repulsive guidance molecule A (432 aa).

An N-terminal signal peptide occupies residues methionine 1–proline 29. The propeptide at cysteine 30–aspartate 149 is removed in mature form. Asparagine 96 carries an N-linked (GlcNAc...) asparagine glycan. The segment at lysine 99 to serine 122 is disordered. 2 disulfides stabilise this stretch: cysteine 126–cysteine 207 and cysteine 144–cysteine 296. Asparagine 140 carries N-linked (GlcNAc...) asparagine glycosylation. Asparagine 404 is lipidated: GPI-anchor amidated asparagine. The propeptide at alanine 405 to leucine 432 is removed in mature form.

Belongs to the repulsive guidance molecule (RGM) family. Autocatalytically cleaved at low pH; the two chains remain linked via two disulfide bonds.

The protein resides in the cell membrane. Functionally, acts as an axon-specific repulsive guidance molecule in the retinotectal system. Repulsive for a subset of axons of the temporal half of the retina. Provides thus positional information for the temporal axons invading the optic tectum in the stratum opticum. In Gallus gallus (Chicken), this protein is Repulsive guidance molecule A (RGMA).